Consider the following 149-residue polypeptide: Large ribosomal subunit protein uL13 (149 aa).

The protein belongs to the universal ribosomal protein uL13 family. Part of the 50S ribosomal subunit.

In terms of biological role, this protein is one of the early assembly proteins of the 50S ribosomal subunit, although it is not seen to bind rRNA by itself. It is important during the early stages of 50S assembly. This Borrelia recurrentis (strain A1) protein is Large ribosomal subunit protein uL13.